The following is a 746-amino-acid chain: Zinc finger protein 366 (746 aa).

Residues 1 to 64 form a disordered region; sequence MQKAMKMVKD…FRYEPSPGDL (64 aa). 11 C2H2-type zinc fingers span residues 250 to 272, 278 to 300, 306 to 328, 334 to 356, 362 to 384, 390 to 412, 418 to 440, 446 to 468, 474 to 496, 502 to 524, and 530 to 553; these read WQCP…ILGH, HACS…MLTH, HKCQ…MMQH, HNCR…EAKH, NICV…LTTH, YNCS…MMKH, YICS…SLTH, HKCG…VLIH, YQCH…MIVH, FKCK…LHLH, and FKCL…KVKH. An interaction with NRIP1 region spans residues 452–746; that stretch reads GREFTLLANM…MEKQAVLLGI (295 aa). The PXDLS motif lies at 587-591; the sequence is PFDLS. Positions 587-689 are disordered; sequence PFDLSQKRSA…DHEGSDIDCE (103 aa). Positions 613 to 627 are enriched in acidic residues; sequence CQEEEEEAGEEDNCY. The span at 675–689 shows a compositional bias: basic and acidic residues; the sequence is EDRSEDHEGSDIDCE.

Interacts with ESR1 and NRIP1. Interacts (via PXDLS motif) with CTBP1. In terms of tissue distribution, expressed in immature and mature dendritic cells (DCs).

It is found in the nucleus. Functionally, has transcriptional repression activity. Acts as a corepressor of ESR1; the function seems to involve CTBP1 and histone deacetylases. This chain is Zinc finger protein 366, found in Mus musculus (Mouse).